Consider the following 338-residue polypeptide: Phosphate acyltransferase (338 aa).

It belongs to the PlsX family. As to quaternary structure, homodimer. Probably interacts with PlsY.

It localises to the cytoplasm. It catalyses the reaction a fatty acyl-[ACP] + phosphate = an acyl phosphate + holo-[ACP]. Its pathway is lipid metabolism; phospholipid metabolism. In terms of biological role, catalyzes the reversible formation of acyl-phosphate (acyl-PO(4)) from acyl-[acyl-carrier-protein] (acyl-ACP). This enzyme utilizes acyl-ACP as fatty acyl donor, but not acyl-CoA. The chain is Phosphate acyltransferase from Alcanivorax borkumensis (strain ATCC 700651 / DSM 11573 / NCIMB 13689 / SK2).